The chain runs to 219 residues: C-type lectin domain family 4 member E (219 aa).

At 1-19 (MNSSKSSETQCTERGCFSS) the chain is on the cytoplasmic side. The helical; Signal-anchor for type II membrane protein transmembrane segment at 20-40 (QMFLWTVAGIPILFLSACFIT) threads the bilayer. The Extracellular segment spans residues 41–219 (RCVVTFRIFQ…INPLNKGKSL (179 aa)). A glycan (N-linked (GlcNAc...) asparagine) is linked at Asn62. Cys80 and Cys91 are joined by a disulfide. The region spanning 87–206 (FQSSCYFFST…CFLNYFRICE (120 aa)) is the C-type lectin domain. Asn107 carries an N-linked (GlcNAc...) asparagine glycan. Intrachain disulfides connect Cys108–Cys205 and Cys179–Cys197. Residues Val117, Asn119, Glu123, Glu169, Asn171, Asn193, Asp194, and Glu206 each coordinate Ca(2+). The short motif at 169-171 (EPN) is the Confers specificity for glucose/mannose-type carbohydrates element.

In terms of assembly, monomer and homodimer. Interacts with signaling adapter Fc receptor gamma chain/FCER1G to form a functional complex; the interaction is direct. Alternatively, acts as a bridge for interaction between CLEC4D and FCER1G. A heterodimer of CLEC4E and CLEC4D associates with FCER1G to form a functional complex. Interacts with SAP130 nuclear protein that is released from necrotic cells; the interaction is direct. As to expression, expressed in monocytes and macrophages.

The protein localises to the cell membrane. It is found in the cell projection. Its subcellular location is the phagocytic cup. Functionally, calcium-dependent lectin that acts as a pattern recognition receptor (PRR) of the innate immune system: recognizes damage-associated molecular patterns (DAMPs) of abnormal self and pathogen-associated molecular patterns (PAMPs) of bacteria and fungi. The PAMPs notably include mycobacterial trehalose 6,6'-dimycolate (TDM), a cell wall glycolipid with potent adjuvant immunomodulatory functions. Interacts with signaling adapter Fc receptor gamma chain/FCER1G to form a functional complex in myeloid cells. Binding of mycobacterial trehalose 6,6'-dimycolate (TDM) to this receptor complex leads to phosphorylation of the immunoreceptor tyrosine-based activation motif (ITAM) of FCER1G, triggering activation of SYK, CARD9 and NF-kappa-B, consequently driving maturation of antigen-presenting cells and shaping antigen-specific priming of T-cells toward effector T-helper 1 and T-helper 17 cell subtypes. Also recognizes alpha-mannose residues on pathogenic fungi of the genus Malassezia and mediates macrophage activation. Through recognition of DAMPs released upon nonhomeostatic cell death, enables immune sensing of damaged self and promotes inflammatory cell infiltration into the damaged tissue. In Homo sapiens (Human), this protein is C-type lectin domain family 4 member E.